We begin with the raw amino-acid sequence, 299 residues long: Probable arylamine N-acetyltransferase 2 (299 aa).

The active-site Acyl-thioester intermediate is the Cys-75. Active-site residues include His-115 and Asp-130.

The protein belongs to the arylamine N-acetyltransferase family.

It carries out the reaction an arylamine + acetyl-CoA = an N-acetylarylamine + CoA. This is Probable arylamine N-acetyltransferase 2 from Dictyostelium discoideum (Social amoeba).